The chain runs to 294 residues: Elongation factor Ts (294 aa).

Residues 81–84 are involved in Mg(2+) ion dislocation from EF-Tu; that stretch reads TDFV.

The protein belongs to the EF-Ts family.

It is found in the cytoplasm. Its function is as follows. Associates with the EF-Tu.GDP complex and induces the exchange of GDP to GTP. It remains bound to the aminoacyl-tRNA.EF-Tu.GTP complex up to the GTP hydrolysis stage on the ribosome. The polypeptide is Elongation factor Ts (tsf) (Mycoplasmopsis pulmonis (strain UAB CTIP) (Mycoplasma pulmonis)).